Here is a 527-residue protein sequence, read N- to C-terminus: Bifunctional pantoate ligase/cytidylate kinase (527 aa).

The tract at residues 1 to 277 (MRQLISPEAL…VGTARLIDNL (277 aa)) is pantoate--beta-alanine ligase. ATP is bound at residue 27–34 (MGALHAGH). The active-site Proton donor is H34. Q58 provides a ligand contact to (R)-pantoate. Q58 contributes to the beta-alanine binding site. Position 147 to 150 (147 to 150 (GEKD)) interacts with ATP. Q153 serves as a coordination point for (R)-pantoate. ATP-binding positions include V176 and 184–187 (LSSR). Positions 278 to 527 (TLQGRRPIIA…GQTPSPLSLG (250 aa)) are cytidylate kinase. Residues 507–527 (GLGDSSPQATPGQTPSPLSLG) are disordered. The span at 511 to 527 (SSPQATPGQTPSPLSLG) shows a compositional bias: polar residues.

In the N-terminal section; belongs to the pantothenate synthetase family. The protein in the C-terminal section; belongs to the cytidylate kinase family. Type 1 subfamily.

Its subcellular location is the cytoplasm. The catalysed reaction is (R)-pantoate + beta-alanine + ATP = (R)-pantothenate + AMP + diphosphate + H(+). It catalyses the reaction CMP + ATP = CDP + ADP. The enzyme catalyses dCMP + ATP = dCDP + ADP. The protein operates within cofactor biosynthesis; (R)-pantothenate biosynthesis; (R)-pantothenate from (R)-pantoate and beta-alanine: step 1/1. Functionally, catalyzes the condensation of pantoate with beta-alanine in an ATP-dependent reaction via a pantoyl-adenylate intermediate. Its function is as follows. Catalyzes the transfer of a phosphate group from ATP to either CMP or dCMP to form CDP or dCDP and ADP, respectively. The polypeptide is Bifunctional pantoate ligase/cytidylate kinase (Synechococcus elongatus (strain ATCC 33912 / PCC 7942 / FACHB-805) (Anacystis nidulans R2)).